Here is a 279-residue protein sequence, read N- to C-terminus: Borealin (279 aa).

A compositionally biased stretch (basic residues) spans 135-152 (KTKAKVAAKKPSTARKTR). Residues 135–180 (KTKAKVAAKKPSTARKTRASTANLTNTSKRTSKRGRATPSASKQIE) are disordered. A compositionally biased stretch (polar residues) spans 153 to 163 (ASTANLTNTSK).

Belongs to the borealin family. In terms of assembly, component of the CPC at least composed of survivin/birc5, incenp, cdca8/borealin and/or cdca9/dasra-A, and aurkb/aurora-B. Interacts with incenp (via N-terminus).

The protein localises to the nucleus. Its subcellular location is the chromosome. The protein resides in the centromere. It is found in the cytoplasm. It localises to the cytoskeleton. The protein localises to the spindle. Component of the chromosomal passenger complex (CPC), a complex that acts as a key regulator of mitosis. The CPC complex has essential functions at the centromere in ensuring correct chromosome alignment and segregation and is required for chromatin-induced microtubule stabilization and spindle assembly. Contributes to CPC function by facilitating loading of the CPC onto chromosomes. In Xenopus tropicalis (Western clawed frog), this protein is Borealin (cdca8).